We begin with the raw amino-acid sequence, 296 residues long: Ribose import binding protein RbsB (296 aa).

An N-terminal signal peptide occupies residues 1–25 (MNMKKLATLVSAVALSATVSANAMA).

This sequence belongs to the bacterial solute-binding protein 2 family. As to quaternary structure, the complex is composed of an ATP-binding protein (RbsA), two transmembrane proteins (RbsC) and a solute-binding protein (RbsB).

Its subcellular location is the periplasm. Its function is as follows. Part of the ABC transporter complex RbsABC involved in ribose import. Binds ribose. In Salmonella typhi, this protein is Ribose import binding protein RbsB (rbsB).